We begin with the raw amino-acid sequence, 405 residues long: Chalcone synthase (405 aa).

Cys170 is an active-site residue.

The protein belongs to the thiolase-like superfamily. Chalcone/stilbene synthases family.

It carries out the reaction (E)-4-coumaroyl-CoA + 3 malonyl-CoA + 3 H(+) = 2',4,4',6'-tetrahydroxychalcone + 3 CO2 + 4 CoA. It functions in the pathway secondary metabolite biosynthesis; flavonoid biosynthesis. In terms of biological role, the primary product of this enzyme is 4,2',4',6'-tetrahydroxychalcone (also termed naringenin-chalcone or chalcone) which can under specific conditions spontaneously isomerize into naringenin. The sequence is that of Chalcone synthase (CHS) from Equisetum arvense (Field horsetail).